A 220-amino-acid polypeptide reads, in one-letter code: Deoxyribose-phosphate aldolase (220 aa).

D89 acts as the Proton donor/acceptor in catalysis. The active-site Schiff-base intermediate with acetaldehyde is K151. The Proton donor/acceptor role is filled by K180.

Belongs to the DeoC/FbaB aldolase family. DeoC type 1 subfamily.

The protein resides in the cytoplasm. The catalysed reaction is 2-deoxy-D-ribose 5-phosphate = D-glyceraldehyde 3-phosphate + acetaldehyde. Its pathway is carbohydrate degradation; 2-deoxy-D-ribose 1-phosphate degradation; D-glyceraldehyde 3-phosphate and acetaldehyde from 2-deoxy-alpha-D-ribose 1-phosphate: step 2/2. In terms of biological role, catalyzes a reversible aldol reaction between acetaldehyde and D-glyceraldehyde 3-phosphate to generate 2-deoxy-D-ribose 5-phosphate. The chain is Deoxyribose-phosphate aldolase from Streptococcus pneumoniae (strain 70585).